A 274-amino-acid chain; its full sequence is Oxidized low-density lipoprotein receptor 1 (274 aa).

Residues 1-16 are compositionally biased toward basic and acidic residues; the sequence is MAVDDLKVKPMKDQPD. Residues 1–25 form a disordered region; the sequence is MAVDDLKVKPMKDQPDQKSNGKKPK. Residues 1–31 lie on the Cytoplasmic side of the membrane; the sequence is MAVDDLKVKPMKDQPDQKSNGKKPKGLRFLS. The helical; Signal-anchor for type II membrane protein transmembrane segment at 32-54 threads the bilayer; the sequence is SPWWCPAAVALGVLCLGSLMTII. 2 S-palmitoyl cysteine lipidation sites follow: cysteine 36 and cysteine 46. Residues 55–150 form a neck region; sequence MLGMQLLQVS…SGPCPEDWLW (96 aa). At 55 to 274 the chain is on the extracellular side; the sequence is MLGMQLLQVS…QKKANLLRSE (220 aa). Residues asparagine 73 and asparagine 139 are each glycosylated (N-linked (GlcNAc...) asparagine). Residues 84–139 are a coiled coil; sequence QVLAQQQAEAASQESQRELKEMIETLAKRLDEKSKKQMELNHQYLNLQEALKRMDN. Disulfide bonds link cysteine 144-cysteine 155, cysteine 172-cysteine 264, and cysteine 243-cysteine 256. In terms of domain architecture, C-type lectin spans 151–265; the sequence is HGKNCYLFSS…CILVAYSICQ (115 aa).

In terms of assembly, homodimer; disulfide-linked. May form a hexamer composed of 3 homodimers. Interacts with HSP70. In terms of processing, N-glycosylated.

The protein localises to the cell membrane. The protein resides in the membrane raft. It is found in the secreted. In terms of biological role, receptor that mediates the recognition, internalization and degradation of oxidatively modified low density lipoprotein (oxLDL) by vascular endothelial cells. OxLDL is a marker of atherosclerosis that induces vascular endothelial cell activation and dysfunction, resulting in pro-inflammatory responses, pro-oxidative conditions and apoptosis. Its association with oxLDL induces the activation of NF-kappa-B through an increased production of intracellular reactive oxygen and a variety of pro-atherogenic cellular responses including a reduction of nitric oxide (NO) release, monocyte adhesion and apoptosis. In addition to binding oxLDL, it acts as a receptor for the HSP70 protein involved in antigen cross-presentation to naive T-cells in dendritic cells, thereby participating in cell-mediated antigen cross-presentation. Also involved in inflammatory process, by acting as a leukocyte-adhesion molecule at the vascular interface in endotoxin-induced inflammation. Also acts as a receptor for advanced glycation end (AGE) products, activated platelets, monocytes, apoptotic cells and both Gram-negative and Gram-positive bacteria. The sequence is that of Oxidized low-density lipoprotein receptor 1 (OLR1) from Oryctolagus cuniculus (Rabbit).